Reading from the N-terminus, the 417-residue chain is Probable secreted aspartic protease ARB_07536 (417 aa).

The N-terminal stretch at 1–20 is a signal peptide; sequence MRGILILVALGAATIPQASA. Positions 42–413 constitute a Peptidase A1 domain; that stretch reads NTDLVTIGTP…DFEKNRVGLA (372 aa). N-linked (GlcNAc...) asparagine glycans are attached at residues asparagine 74, asparagine 91, asparagine 100, asparagine 170, asparagine 276, and asparagine 314. Cysteine 333 and cysteine 373 form a disulfide bridge.

This sequence belongs to the peptidase A1 family.

It is found in the secreted. Probable secreted aspartic protease that supplies the fungus with nutrient amino acids. May be able to degrade the selected host's proteins involved in the immune defense. In Arthroderma benhamiae (strain ATCC MYA-4681 / CBS 112371) (Trichophyton mentagrophytes), this protein is Probable secreted aspartic protease ARB_07536.